Consider the following 673-residue polypeptide: DNA ligase (673 aa).

NAD(+)-binding positions include 38 to 42 (DSVYD), 87 to 88 (SL), and glutamate 119. The active-site N6-AMP-lysine intermediate is the lysine 121. Arginine 142, glutamate 179, lysine 296, and lysine 320 together coordinate NAD(+). Zn(2+) is bound by residues cysteine 414, cysteine 417, cysteine 432, and cysteine 438. In terms of domain architecture, BRCT spans 595-673 (VVKSEIAGKT…EEAFLKLLKS (79 aa)).

Belongs to the NAD-dependent DNA ligase family. LigA subfamily. Mg(2+) is required as a cofactor. The cofactor is Mn(2+).

It catalyses the reaction NAD(+) + (deoxyribonucleotide)n-3'-hydroxyl + 5'-phospho-(deoxyribonucleotide)m = (deoxyribonucleotide)n+m + AMP + beta-nicotinamide D-nucleotide.. Functionally, DNA ligase that catalyzes the formation of phosphodiester linkages between 5'-phosphoryl and 3'-hydroxyl groups in double-stranded DNA using NAD as a coenzyme and as the energy source for the reaction. It is essential for DNA replication and repair of damaged DNA. The sequence is that of DNA ligase from Coxiella burnetii (strain CbuK_Q154) (Coxiella burnetii (strain Q154)).